The chain runs to 105 residues: NADH-quinone oxidoreductase subunit K (105 aa).

3 helical membrane passes run 9 to 29 (PNYY…GVLV), 34 to 54 (IVLF…LVTF), and 65 to 85 (IIAF…LAII).

The protein belongs to the complex I subunit 4L family. As to quaternary structure, NDH-1 is composed of 14 different subunits. Subunits NuoA, H, J, K, L, M, N constitute the membrane sector of the complex.

The protein resides in the cell membrane. It catalyses the reaction a quinone + NADH + 5 H(+)(in) = a quinol + NAD(+) + 4 H(+)(out). In terms of biological role, NDH-1 shuttles electrons from NADH, via FMN and iron-sulfur (Fe-S) centers, to quinones in the respiratory chain. The immediate electron acceptor for the enzyme in this species is believed to be a menaquinone. Couples the redox reaction to proton translocation (for every two electrons transferred, four hydrogen ions are translocated across the cytoplasmic membrane), and thus conserves the redox energy in a proton gradient. In Salinispora arenicola (strain CNS-205), this protein is NADH-quinone oxidoreductase subunit K.